A 353-amino-acid polypeptide reads, in one-letter code: Guanine nucleotide-binding protein subunit alpha (353 aa).

A disordered region spans residues 1–25 (MGCGMSTEDKEGKARNEEIENQLKR). A lipid anchor (N-myristoyl glycine) is attached at G2. Residue C3 is the site of S-palmitoyl cysteine attachment. Basic and acidic residues predominate over residues 7-25 (TEDKEGKARNEEIENQLKR). The 322-residue stretch at 32–353 (NEIKMLLLGA…QENLRLCGLI (322 aa)) folds into the G-alpha domain. Residues 35–48 (KMLLLGAGESGKST) are G1 motif. 14 residues coordinate GTP: E43, S44, G45, K46, S47, T48, D150, L175, T181, G203, N269, K270, D272, and A325. S47 contacts Mg(2+). Residues 173-181 (DVLRSRVKT) form a G2 motif region. T181 is a Mg(2+) binding site. The tract at residues 196-205 (YRMFDVGGQR) is G3 motif. The interval 265 to 272 (ILFLNKID) is G4 motif. Positions 323-328 (TCATDT) are G5 motif.

It belongs to the G-alpha family. G(q) subfamily. As to quaternary structure, g proteins are composed of 3 units; alpha, beta and gamma. The alpha chain contains the guanine nucleotide binding site. It depends on Mg(2+) as a cofactor.

In terms of biological role, guanine nucleotide-binding proteins (G proteins) are involved as modulators or transducers in various transmembrane signaling systems. In Colletotrichum trifolii, this protein is Guanine nucleotide-binding protein subunit alpha (CTG1).